The chain runs to 185 residues: Putative manganese efflux pump MntP (185 aa).

6 consecutive transmembrane segments (helical) span residues 4 to 24 (LLLS…SVSL), 43 to 63 (IFFG…GVPI), 67 to 87 (IDPF…GKMI), 107 to 127 (LLLA…FALI), 131 to 151 (VLLP…FGVL), and 165 to 185 (QILG…EYCL).

This sequence belongs to the MntP (TC 9.B.29) family.

The protein localises to the cell membrane. Probably functions as a manganese efflux pump. The sequence is that of Putative manganese efflux pump MntP from Methanocorpusculum labreanum (strain ATCC 43576 / DSM 4855 / Z).